A 112-amino-acid polypeptide reads, in one-letter code: Small ribosomal subunit protein bS6 (112 aa).

It belongs to the bacterial ribosomal protein bS6 family.

Functionally, binds together with bS18 to 16S ribosomal RNA. In Chlamydia pneumoniae (Chlamydophila pneumoniae), this protein is Small ribosomal subunit protein bS6 (rpsF).